The chain runs to 146 residues: Large ribosomal subunit protein bL21 (146 aa).

The span at 95–104 shows a compositional bias: basic residues; sequence PKKKTRRKMG. The interval 95–146 is disordered; it reads PKKKTRRKMGHRQELTRVMVKSISISKSTPKSSPKTEATKKSTSSKASKPEN. The segment covering 115–146 has biased composition (low complexity); the sequence is KSISISKSTPKSSPKTEATKKSTSSKASKPEN.

The protein belongs to the bacterial ribosomal protein bL21 family. In terms of assembly, part of the 50S ribosomal subunit. Contacts protein L20.

In terms of biological role, this protein binds to 23S rRNA in the presence of protein L20. This is Large ribosomal subunit protein bL21 from Prochlorococcus marinus (strain MIT 9515).